The following is a 122-amino-acid chain: Large ribosomal subunit protein uL14c (122 aa).

Belongs to the universal ribosomal protein uL14 family. In terms of assembly, part of the 50S ribosomal subunit.

Its subcellular location is the plastid. The protein resides in the chloroplast. Functionally, binds to 23S rRNA. The sequence is that of Large ribosomal subunit protein uL14c from Stigeoclonium helveticum (Green alga).